The chain runs to 316 residues: B3 domain-containing protein Os04g0581400 (316 aa).

The tract at residues 1–100 (MEFATTSSRF…GSGGGGGGED (100 aa)) is disordered. The span at 13–36 (EEEEEEEGEQEMEQEQDEEEEEAE) shows a compositional bias: acidic residues. Low complexity predominate over residues 46-77 (TSAAAAATASSSSPTSVSPSATASAAASTSAS). Gly residues predominate over residues 88–98 (GASGSGGGGGG). The segment at residues 110 to 215 (FDKVVTPSDV…RLFIDWKRRA (106 aa)) is a DNA-binding region (TF-B3). The segment at 239–290 (GGAGASSCRPRRPPRSTSITAFARASTSATSTPLCRRGSSSSSAPQGRGFIS) is disordered. The span at 253 to 270 (RSTSITAFARASTSATST) shows a compositional bias: low complexity.

It localises to the nucleus. In Oryza sativa subsp. japonica (Rice), this protein is B3 domain-containing protein Os04g0581400.